We begin with the raw amino-acid sequence, 648 residues long: Sodium/nucleoside cotransporter 1 (648 aa).

Residues 1–83 (MADDTPRQRE…LCREHWQLFE (83 aa)) are Cytoplasmic-facing. Residues 84–104 (WISKGLLSTAYIGFLIVACLL) traverse the membrane as a helical segment. Over 105–108 (DFPR) the chain is Extracellular. A helical transmembrane segment spans residues 109–129 (ALALFVITCVVLVFLAYNLLK). At 130–147 (RLLGSKLKKCVKFQGHSC) the chain is on the cytoplasmic side. The helical transmembrane segment at 148 to 168 (LSLWLKRGLALAAGLGVILWL) threads the bilayer. Residues 169–175 (SLDTAQR) are Extracellular-facing. The helical transmembrane segment at 176-196 (PEQLVSFAGICVFLVLLFAGS) threads the bilayer. The Cytoplasmic portion of the chain corresponds to 197 to 201 (KHHRA). A helical transmembrane segment spans residues 202–222 (VSWRAVSWGLGLQFVLGLFVI). The Extracellular portion of the chain corresponds to 223-265 (RTEPGFVAFQWLGDQIRVFLSYTEAGSSFVFGEALVKDVFAFQ). The chain crosses the membrane as a helical span at residues 266 to 286 (VLPIIVFFSCVMSVLYYLGLM). Residues 287–294 (QWVILKIA) are Cytoplasmic-facing. Residues 295–318 (WLMQVTMGTSATETLSVAGNIFVS) form a helical membrane-spanning segment. Topologically, residues 319–339 (QTEAPLLIRPYLADMTLSEVH) are extracellular. Residues 340 to 360 (VVMTGGYATIAGSLLGAYISF) traverse the membrane as a helical segment. Residue Gly-361 is a topological domain, cytoplasmic. The helical transmembrane segment at 362-380 (IDASSLIAASVMAAPCALA) threads the bilayer. Topologically, residues 381–427 (LSKLVYPEVEESKFRSEEGVKLTYGDAQNLVEAASAGAAISVKVVAN) are extracellular. The helical transmembrane segment at 428–448 (IAANLIAFLAVLAFINAALSW) threads the bilayer. The Cytoplasmic segment spans residues 449–470 (LGDMVDIQGLSFQLICSYVLRP). The chain crosses the membrane as a helical span at residues 471–491 (VAFLMGVAWEDCPVVAELLGI). Over 492-531 (KLFLNEFVAYQELSQYKQRRLAGAEEWLGDKKQWISVRAE) the chain is Extracellular. A helical membrane pass occupies residues 532-552 (ILTTYALCGFANFSSIGIMLG). The Cytoplasmic segment spans residues 553–571 (GLTSMVPQRRSDFSQIVLR). A helical transmembrane segment spans residues 572–592 (ALITGAFVSLVNACVAGILYV). At 593 to 648 (PRGVEVDCMSLLNQTVSSSSFEVYLCCRQVFQNTSLEFGQEALHNCCRFYNHTVCT) the chain is on the extracellular side. N-linked (GlcNAc...) asparagine glycosylation is found at Asn-605, Asn-625, and Asn-643.

This sequence belongs to the concentrative nucleoside transporter (CNT) (TC 2.A.41) family. Post-translationally, N-glycosylated. N-glycosylation is required for localization to the plasma membrane and the transporter activity.

The protein resides in the cell membrane. Its subcellular location is the apical cell membrane. It carries out the reaction uridine(out) + Na(+)(out) = uridine(in) + Na(+)(in). The enzyme catalyses thymidine(out) + Na(+)(out) = thymidine(in) + Na(+)(in). The catalysed reaction is cytidine(out) + Na(+)(out) = cytidine(in) + Na(+)(in). It catalyses the reaction adenosine(out) + Na(+)(out) = adenosine(in) + Na(+)(in). Its activity is regulated as follows. Due to its high apparent affinity but slow transport, adenosine could act as a negative regulator of pyrimidine transport under some conditions. Sodium and pyrimidine nucleoside symporter of the plasma membrane that imports uridine, thymidine and cytidine into cells by coupling their transport to the transmembrane sodium electrochemical gradient. Also transports adenosine, an atypical substrate transported with high apparent affinity, but low maximum velocity. Therefore, exhibits the transport characteristics of the nucleoside transport system cit or N2 subtype (N2/cit). Involved in renal nucleoside (re)absorption. The sequence is that of Sodium/nucleoside cotransporter 1 from Mus musculus (Mouse).